A 26-amino-acid polypeptide reads, in one-letter code: Somatostatin-1 (26 aa).

C15 and C26 form a disulfide bridge.

Belongs to the somatostatin family.

The protein resides in the secreted. Somatostatin inhibits the release of somatotropin. This Amia calva (Bowfin) protein is Somatostatin-1 (sst1).